The sequence spans 307 residues: Mitochondrial brown fat uncoupling protein 1 (307 aa).

Residues 1 to 10 (MVSSTTSEVQ) are Mitochondrial intermembrane-facing. The helical transmembrane segment at 11–32 (PTMGVKIFSAGVSACLADIITF) threads the bilayer. Solcar repeat units follow at residues 11–102 (PTMG…VQEY), 111–201 (ASLG…MKGA), and 210–295 (DDVP…LKKE). Topologically, residues 33–73 (PLDTAKVRLQIQGEGQASSTIRYKGVLGTITTLAKTEGLPK) are mitochondrial matrix. Fatty acid 16:0 is bound at residue lysine 56. A helical membrane pass occupies residues 74–96 (LYSGLPAGIQRQISFASLRIGLY). The Mitochondrial intermembrane portion of the chain corresponds to 97–116 (DTVQEYFSSGRETPASLGSK). The chain crosses the membrane as a helical span at residues 117 to 133 (ISAGLMTGGVAVFIGQP). At 134–178 (TEVVKVRMQAQSHLHGIKPRYTGTYNAYRVIATTESLSTLWKGTT) the chain is on the mitochondrial matrix side. A helical membrane pass occupies residues 179–195 (PNLMRNVIINCTELVTY). The Mitochondrial intermembrane segment spans residues 196–212 (DLMKGALVNHHILADDV). A helical membrane pass occupies residues 213–232 (PCHLLSALVAGFCTTLLASP). Residues 233–266 (VDVVKTRFINSLPGQYPSVPSCAMTMYTKEGPAA) lie on the Mitochondrial matrix side of the membrane. Cysteine 254 is modified (cysteine sulfenic acid (-SOH)). A helical transmembrane segment spans residues 267–289 (FFKGFAPSFLRLGSWNVIMFVCF). Lysine 269 provides a ligand contact to fatty acid 16:0. Over 290-307 (EQLKKELMKSRQTVDCTT) the chain is Mitochondrial intermembrane.

The protein belongs to the mitochondrial carrier (TC 2.A.29) family. In terms of assembly, most probably functions as a monomer. Binds one purine nucleotide per monomer. However, has also been suggested to function as a homodimer or a homotetramer. Tightly associates with cardiolipin in the mitochondrion inner membrane; may stabilize and regulate its activity. Post-translationally, may undergo ubiquitin-mediated proteasomal degradation. In terms of processing, may undergo sulfenylation upon cold exposure. May increase the sensitivity of UCP1 thermogenic function to the activation by noradrenaline probably through structural effects. Brown adipose tissue.

The protein resides in the mitochondrion inner membrane. The enzyme catalyses H(+)(in) = H(+)(out). Its activity is regulated as follows. Has no constitutive proton transporter activity and has to be activated by long-chain fatty acids/LCFAs. Inhibited by purine nucleotides. Both purine nucleotides and LCFAs bind the cytosolic side of the transporter and directly compete to activate or inhibit it. Activated by noradrenaline and reactive oxygen species. Despite lacking canonical translational encoding for selenocysteine, a small pool of the protein has been observed to selectively incorporate selenocysteine at 'Cys-254'. Selenocysteine-modified protein is highly sensitive to redox modification and may constitute a pool of protein highly sensitive to activation by elevated levels of reactive oxygen species (ROS). In terms of biological role, mitochondrial protein responsible for thermogenic respiration, a specialized capacity of brown adipose tissue and beige fat that participates in non-shivering adaptive thermogenesis to temperature and diet variations and more generally to the regulation of energy balance. Functions as a long-chain fatty acid/LCFA and proton symporter, simultaneously transporting one LCFA and one proton through the inner mitochondrial membrane. However, LCFAs remaining associated with the transporter via their hydrophobic tails, it results in an apparent transport of protons activated by LCFAs. Thereby, dissipates the mitochondrial proton gradient and converts the energy of substrate oxydation into heat instead of ATP. Regulates the production of reactive oxygen species/ROS by mitochondria. This Rattus norvegicus (Rat) protein is Mitochondrial brown fat uncoupling protein 1.